Here is a 369-residue protein sequence, read N- to C-terminus: 4-hydroxy-3-methylbut-2-en-1-yl diphosphate synthase (flavodoxin) (369 aa).

[4Fe-4S] cluster contacts are provided by Cys-270, Cys-273, Cys-305, and Glu-312.

It belongs to the IspG family. [4Fe-4S] cluster is required as a cofactor.

The catalysed reaction is (2E)-4-hydroxy-3-methylbut-2-enyl diphosphate + oxidized [flavodoxin] + H2O + 2 H(+) = 2-C-methyl-D-erythritol 2,4-cyclic diphosphate + reduced [flavodoxin]. Its pathway is isoprenoid biosynthesis; isopentenyl diphosphate biosynthesis via DXP pathway; isopentenyl diphosphate from 1-deoxy-D-xylulose 5-phosphate: step 5/6. Functionally, converts 2C-methyl-D-erythritol 2,4-cyclodiphosphate (ME-2,4cPP) into 1-hydroxy-2-methyl-2-(E)-butenyl 4-diphosphate. In Pseudomonas fluorescens (strain Pf0-1), this protein is 4-hydroxy-3-methylbut-2-en-1-yl diphosphate synthase (flavodoxin).